A 270-amino-acid chain; its full sequence is Glutamate racemase (270 aa).

Substrate-binding positions include 7–8 and 39–40; these read DS and YG. The active-site Proton donor/acceptor is C70. 71–72 contributes to the substrate binding site; the sequence is NT. The Proton donor/acceptor role is filled by C194. Residue 195–196 coordinates substrate; sequence TH.

Belongs to the aspartate/glutamate racemases family.

It carries out the reaction L-glutamate = D-glutamate. The protein operates within cell wall biogenesis; peptidoglycan biosynthesis. Provides the (R)-glutamate required for cell wall biosynthesis. This Jannaschia sp. (strain CCS1) protein is Glutamate racemase.